The sequence spans 326 residues: Protein BugT (326 aa).

An N-terminal signal peptide occupies residues 1–25 (MNMTRLLAVIGIFIATAGIAAPVSA).

Belongs to the UPF0065 (bug) family.

It is found in the periplasm. The sequence is that of Protein BugT (bugT) from Bordetella pertussis (strain Tohama I / ATCC BAA-589 / NCTC 13251).